Reading from the N-terminus, the 380-residue chain is Queuine tRNA-ribosyltransferase (380 aa).

D96 serves as the catalytic Proton acceptor. Residues 96–100 (DSGGF), D150, Q193, and G220 contribute to the substrate site. The interval 251-257 (GVGAPDS) is RNA binding. D270 (nucleophile) is an active-site residue. The interval 275–279 (TRIAR) is RNA binding; important for wobble base 34 recognition. Zn(2+) contacts are provided by C308, C310, C313, and H339.

It belongs to the queuine tRNA-ribosyltransferase family. In terms of assembly, homodimer. Within each dimer, one monomer is responsible for RNA recognition and catalysis, while the other monomer binds to the replacement base PreQ1. Requires Zn(2+) as cofactor.

The enzyme catalyses 7-aminomethyl-7-carbaguanine + guanosine(34) in tRNA = 7-aminomethyl-7-carbaguanosine(34) in tRNA + guanine. The protein operates within tRNA modification; tRNA-queuosine biosynthesis. Functionally, catalyzes the base-exchange of a guanine (G) residue with the queuine precursor 7-aminomethyl-7-deazaguanine (PreQ1) at position 34 (anticodon wobble position) in tRNAs with GU(N) anticodons (tRNA-Asp, -Asn, -His and -Tyr). Catalysis occurs through a double-displacement mechanism. The nucleophile active site attacks the C1' of nucleotide 34 to detach the guanine base from the RNA, forming a covalent enzyme-RNA intermediate. The proton acceptor active site deprotonates the incoming PreQ1, allowing a nucleophilic attack on the C1' of the ribose to form the product. After dissociation, two additional enzymatic reactions on the tRNA convert PreQ1 to queuine (Q), resulting in the hypermodified nucleoside queuosine (7-(((4,5-cis-dihydroxy-2-cyclopenten-1-yl)amino)methyl)-7-deazaguanosine). This is Queuine tRNA-ribosyltransferase from Streptococcus gordonii (strain Challis / ATCC 35105 / BCRC 15272 / CH1 / DL1 / V288).